The following is a 96-amino-acid chain: Large ribosomal subunit protein eL14 (96 aa).

It belongs to the eukaryotic ribosomal protein eL14 family.

In Desulfurococcus amylolyticus (strain DSM 18924 / JCM 16383 / VKM B-2413 / 1221n) (Desulfurococcus kamchatkensis), this protein is Large ribosomal subunit protein eL14.